A 420-amino-acid polypeptide reads, in one-letter code: Tol-Pal system protein TolB (420 aa).

An N-terminal signal peptide occupies residues 1–21; that stretch reads MKLFVHLVLFISLFIPYFTKA.

The protein belongs to the TolB family. As to quaternary structure, the Tol-Pal system is composed of five core proteins: the inner membrane proteins TolA, TolQ and TolR, the periplasmic protein TolB and the outer membrane protein Pal. They form a network linking the inner and outer membranes and the peptidoglycan layer.

Its subcellular location is the periplasm. In terms of biological role, part of the Tol-Pal system, which plays a role in outer membrane invagination during cell division and is important for maintaining outer membrane integrity. This Wolbachia sp. subsp. Drosophila simulans (strain wRi) protein is Tol-Pal system protein TolB.